Here is a 529-residue protein sequence, read N- to C-terminus: Glucose-6-phosphate isomerase (529 aa).

Glutamate 322 functions as the Proton donor in the catalytic mechanism. Residues histidine 351 and lysine 455 contribute to the active site.

It belongs to the GPI family.

The protein resides in the cytoplasm. The catalysed reaction is alpha-D-glucose 6-phosphate = beta-D-fructose 6-phosphate. It functions in the pathway carbohydrate biosynthesis; gluconeogenesis. Its pathway is carbohydrate degradation; glycolysis; D-glyceraldehyde 3-phosphate and glycerone phosphate from D-glucose: step 2/4. Catalyzes the reversible isomerization of glucose-6-phosphate to fructose-6-phosphate. This chain is Glucose-6-phosphate isomerase, found in Acaryochloris marina (strain MBIC 11017).